A 915-amino-acid polypeptide reads, in one-letter code: Nitrate reductase [NADH] (915 aa).

Residues 1-102 (MAASVEPRQP…PRDEGTADAW (102 aa)) are disordered. Over residues 16–26 (APATAPTARAP) the composition is skewed to low complexity. A compositionally biased stretch (acidic residues) spans 57 to 71 (AEEEEDDDDEDDEGH). Positions 88-97 (PSTRDPRDEG) are enriched in basic and acidic residues. C189 is a binding site for Mo-molybdopterin. The region spanning 538 to 613 (DKQFTMSEVR…LDTYRIGELI (76 aa)) is the Cytochrome b5 heme-binding domain. Positions 573 and 596 each coordinate heme. An FAD-binding FR-type domain is found at 654–767 (REKVPCRLVD…KGPLGHVEYT (114 aa)). FAD contacts are provided by residues 706-709 (RAYT), 723-727 (LVKVY), F728, F735, 740-742 (LMT), S791, and T794.

The protein belongs to the nitrate reductase family. Homodimer. The cofactor is FAD. Heme serves as cofactor. Mo-molybdopterin is required as a cofactor.

It catalyses the reaction nitrite + NAD(+) + H2O = nitrate + NADH + H(+). Nitrate reductase is a key enzyme involved in the first step of nitrate assimilation in plants, fungi and bacteria. The polypeptide is Nitrate reductase [NADH] (Hordeum vulgare (Barley)).